A 216-amino-acid chain; its full sequence is Large ribosomal subunit protein uL3 (216 aa).

A disordered region spans residues 132-155 (QDASHGNSRSHRVPGSIGQNQTPG). Residue Gln152 is modified to N5-methylglutamine.

This sequence belongs to the universal ribosomal protein uL3 family. As to quaternary structure, part of the 50S ribosomal subunit. Forms a cluster with proteins L14 and L19. Post-translationally, methylated by PrmB.

Its function is as follows. One of the primary rRNA binding proteins, it binds directly near the 3'-end of the 23S rRNA, where it nucleates assembly of the 50S subunit. This is Large ribosomal subunit protein uL3 from Legionella pneumophila (strain Paris).